Consider the following 138-residue polypeptide: Nucleoside diphosphate kinase (138 aa).

ATP contacts are provided by Lys-9, Phe-57, Arg-85, Thr-91, Arg-102, and Asn-112. His-115 acts as the Pros-phosphohistidine intermediate in catalysis.

The protein belongs to the NDK family. As to quaternary structure, homotetramer. Requires Mg(2+) as cofactor.

It localises to the cytoplasm. The enzyme catalyses a 2'-deoxyribonucleoside 5'-diphosphate + ATP = a 2'-deoxyribonucleoside 5'-triphosphate + ADP. The catalysed reaction is a ribonucleoside 5'-diphosphate + ATP = a ribonucleoside 5'-triphosphate + ADP. Major role in the synthesis of nucleoside triphosphates other than ATP. The ATP gamma phosphate is transferred to the NDP beta phosphate via a ping-pong mechanism, using a phosphorylated active-site intermediate. This is Nucleoside diphosphate kinase from Deinococcus geothermalis (strain DSM 11300 / CIP 105573 / AG-3a).